A 188-amino-acid chain; its full sequence is Large ribosomal subunit protein bL35m (188 aa).

It belongs to the bacterial ribosomal protein bL35 family. Component of the mitochondrial large ribosomal subunit (mt-LSU). Mature mammalian 55S mitochondrial ribosomes consist of a small (28S) and a large (39S) subunit. The 28S small subunit contains a 12S ribosomal RNA (12S mt-rRNA) and 30 different proteins. The 39S large subunit contains a 16S rRNA (16S mt-rRNA), a copy of mitochondrial valine transfer RNA (mt-tRNA(Val)), which plays an integral structural role, and 52 different proteins.

Its subcellular location is the mitochondrion. The protein is Large ribosomal subunit protein bL35m (MRPL35) of Homo sapiens (Human).